The sequence spans 598 residues: UvrABC system protein C (598 aa).

The 81-residue stretch at 11 to 91 folds into the GIY-YIG domain; the sequence is QKPGVYIMHN…IKKYRPHYNI (81 aa). Residues 195-230 form the UVR domain; that stretch reads KTTIKKLKKDMNRYAKNMEFEKAAMLRDQIDTIKIT.

It belongs to the UvrC family. Interacts with UvrB in an incision complex.

It is found in the cytoplasm. Functionally, the UvrABC repair system catalyzes the recognition and processing of DNA lesions. UvrC both incises the 5' and 3' sides of the lesion. The N-terminal half is responsible for the 3' incision and the C-terminal half is responsible for the 5' incision. The polypeptide is UvrABC system protein C (Methanosphaera stadtmanae (strain ATCC 43021 / DSM 3091 / JCM 11832 / MCB-3)).